An 834-amino-acid chain; its full sequence is Taste receptor type 1 member 2 (834 aa).

A signal peptide spans 1-19 (MGPRARTVCFLFFLLWVLA). The Extracellular portion of the chain corresponds to 20-561 (ELAENSDFHL…SFLEWHEAAT (542 aa)). 7 N-linked (GlcNAc...) asparagine glycosylation sites follow: Asn84, Asn292, Asn312, Asn363, Asn423, Asn482, and Asn522. A helical membrane pass occupies residues 562 to 582 (IAVALLAALGFLXXXXXXXXX). The Cytoplasmic portion of the chain corresponds to 583–597 (XXXXXXPMVRSAGGP). The helical transmembrane segment at 598-618 (MCFLMLTLLLVAYMVVPVYVG) threads the bilayer. Topologically, residues 619-630 (PPKVTTCLCRQA) are extracellular. The helical transmembrane segment at 631–651 (LFPVCFTICISCITMRSFQIV) threads the bilayer. The Cytoplasmic portion of the chain corresponds to 652 to 676 (CVFKMASRFPRAYSYWVRYQGSYVS). The helical transmembrane segment at 677 to 697 (VAFITALKVVTVVISLLATGL) threads the bilayer. The Extracellular segment spans residues 698–722 (NPTTRADTDDPKIMIISCNPNYRNS). A helical membrane pass occupies residues 723–743 (LLFNTSLDLLLSVVGFSFAYM). The Cytoplasmic segment spans residues 744–755 (GKELPTNYNEAK). The helical transmembrane segment at 756-776 (FITFSMTFYFTSSVSLCTFMS) threads the bilayer. Topologically, residues 777-779 (VYD) are extracellular. A helical transmembrane segment spans residues 780–800 (GVLVTIVDLLVTVFNLLAISL). Over 801 to 834 (GYFGPKCYMILFYPERNTPAYFNSMIQGYTMRRD) the chain is Cytoplasmic.

Belongs to the G-protein coupled receptor 3 family. TAS1R subfamily. As to quaternary structure, forms heterodimers with TAS1R3.

The protein localises to the cell membrane. Its function is as follows. Putative taste receptor. TAS1R2/TAS1R3 recognizes diverse natural and synthetic sweeteners. This chain is Taste receptor type 1 member 2 (TAS1R2), found in Cebuella pygmaea (Pygmy marmoset).